Here is a 240-residue protein sequence, read N- to C-terminus: Protein YIPF6 (240 aa).

Over 1 to 91 (MVVSHLNRTV…PKKSSALLRD (91 aa)) the chain is Cytoplasmic. A helical membrane pass occupies residues 92 to 112 (WDLWGPLLLCVTLALMLQGGS). Residues 113–125 (ADSEEDGRPQFAE) lie on the Lumenal side of the membrane. The chain crosses the membrane as a helical span at residues 126 to 146 (VFVIIWFGSVIITLNSKLLGG). Topologically, residues 147-149 (TIS) are cytoplasmic. Residues 150–170 (FFQSLCVLGYCILPLTVAMIV) traverse the membrane as a helical segment. At 171 to 172 (CR) the chain is on the lumenal side. A helical membrane pass occupies residues 173–193 (IVLLGGSGVVSFAVRLIVVTA). The Cytoplasmic portion of the chain corresponds to 194–215 (SFSWSTFASTAFLADSQPTNRK). Residues 216–236 (ALVVYPVFLFYFVIGWMILTF) form a helical membrane-spanning segment. Over 237 to 240 (SPSH) the chain is Lumenal.

It belongs to the YIP1 family.

The protein localises to the golgi apparatus membrane. The polypeptide is Protein YIPF6 (yipf6) (Danio rerio (Zebrafish)).